A 182-amino-acid polypeptide reads, in one-letter code: NAD(P)H-quinone oxidoreductase subunit I, chloroplastic (182 aa).

4Fe-4S ferredoxin-type domains follow at residues 55–84 and 95–124; these read GRIH…VDWK and LNYS…MTEE. Positions 64, 67, 70, 74, 104, 107, 110, and 114 each coordinate [4Fe-4S] cluster.

It belongs to the complex I 23 kDa subunit family. NDH is composed of at least 16 different subunits, 5 of which are encoded in the nucleus. [4Fe-4S] cluster is required as a cofactor.

Its subcellular location is the plastid. It localises to the chloroplast thylakoid membrane. It catalyses the reaction a plastoquinone + NADH + (n+1) H(+)(in) = a plastoquinol + NAD(+) + n H(+)(out). The enzyme catalyses a plastoquinone + NADPH + (n+1) H(+)(in) = a plastoquinol + NADP(+) + n H(+)(out). Its function is as follows. NDH shuttles electrons from NAD(P)H:plastoquinone, via FMN and iron-sulfur (Fe-S) centers, to quinones in the photosynthetic chain and possibly in a chloroplast respiratory chain. The immediate electron acceptor for the enzyme in this species is believed to be plastoquinone. Couples the redox reaction to proton translocation, and thus conserves the redox energy in a proton gradient. This Buxus microphylla (Littleleaf boxwood) protein is NAD(P)H-quinone oxidoreductase subunit I, chloroplastic.